Reading from the N-terminus, the 680-residue chain is Viral IRF2-like protein (680 aa).

The IRF tryptophan pentad repeat DNA-binding region spans S7 to M103. Disordered stretches follow at residues S156–E201, E220–T257, E343–S365, and A403–S423. Residues K168–S188 are compositionally biased toward low complexity. Over residues E191 to N200 the composition is skewed to acidic residues. Low complexity predominate over residues E220–D240.

Belongs to the IRF family. As to quaternary structure, interacts with host EIF2AK2/PKR. Interacts with host USP7.

Its subcellular location is the host nucleus. It localises to the host cytoplasm. DNA-binding transcription factor that plays a role in the modulation of host immune response. Acts by interacting with host EIF2AK2/PKR and inhibiting its activation. In turn, EIF2AK2/PKR substrates including EIF2S1 or histone H2A are not phosphorylated. Inhibits type I interferon signaling by targeting host IRF3 during viral reactivation from latency. Attenuates the transcriptional activity of host FOXO3 via activation of the AKT1 signaling pathway, inhibiting FOXO3-mediated apoptosis. Also suppresses the expression of viral early lytic genes in both newly infected and reactivated infected host cells allowing regulation of viral life cycle by harnessing the interferon pathway. Mechanistically, promotes host PML bodies formation as well as host antiviral restriction factors IFIT1-3 expression leading to inhibition of viral early lytic proteins. Also regulates host TRAF3 and TRAF6 ubiquitination by interacting with USP7 deubiquitinase thereby influencing TRAF3/6-mediated signal transduction. The protein is Viral IRF2-like protein (vIRF-2) of Human herpesvirus 8 type P (isolate GK18) (HHV-8).